The sequence spans 182 residues: Large ribosomal subunit protein uL6 (182 aa).

The protein belongs to the universal ribosomal protein uL6 family. In terms of assembly, part of the 50S ribosomal subunit.

Its function is as follows. This protein binds to the 23S rRNA, and is important in its secondary structure. It is located near the subunit interface in the base of the L7/L12 stalk, and near the tRNA binding site of the peptidyltransferase center. The protein is Large ribosomal subunit protein uL6 of Methanococcus maripaludis (strain C6 / ATCC BAA-1332).